The following is a 94-amino-acid chain: Alpha-conotoxin-like Vt20.1 (94 aa).

Residues 1 to 25 (MPKLAVVLLVLLILPLSYFDAGGQA) form the signal peptide. Residues 26 to 44 (VQGDWRGNRLARDLQRGGR) constitute a propeptide that is removed on maturation. 2 positions are modified to 4-carboxyglutamate: Glu-47 and Glu-49. 4 disulfide bridges follow: Cys-63–Cys-72, Cys-68–Cys-80, Cys-73–Cys-90, and Cys-78–Cys-92.

Belongs to the conotoxin D superfamily. As to quaternary structure, hetero-, homo- or pseudo-homodimer (identical sequence, different post-translational modifications). In terms of tissue distribution, expressed by the venom duct.

The protein resides in the secreted. Its function is as follows. Alpha-conotoxins act on postsynaptic membranes, they bind to the nicotinic acetylcholine receptors (nAChR) and thus inhibit them. Through its two C-terminal domains, this homodimeric protein would bind to two nAChR allosteric sites, located outside the nAChR C-loop of the principal binding face and at the adjacent binding interface in a clockwise direction. This toxin specifically blocks mammalian neuronal nAChR of the alpha-7/CHRNA7, alpha-3-beta-2/CHRNA3-CHRNB2 and alpha-4-beta-2/CHRNA4-CHRNB2 subtypes. The chain is Alpha-conotoxin-like Vt20.1 from Conus planorbis (Planorbis cone).